The following is a 172-amino-acid chain: Translationally-controlled tumor protein homolog (172 aa).

The region spanning methionine 1–cysteine 172 is the TCTP domain.

Belongs to the TCTP family.

It localises to the cytoplasm. Its function is as follows. Involved in calcium binding and microtubule stabilization. The sequence is that of Translationally-controlled tumor protein homolog (tpt1) from Xenopus laevis (African clawed frog).